Reading from the N-terminus, the 378-residue chain is Lipid-A-disaccharide synthase (378 aa).

Belongs to the LpxB family.

It catalyses the reaction a lipid X + a UDP-2-N,3-O-bis[(3R)-3-hydroxyacyl]-alpha-D-glucosamine = a lipid A disaccharide + UDP + H(+). It participates in bacterial outer membrane biogenesis; LPS lipid A biosynthesis. Its function is as follows. Condensation of UDP-2,3-diacylglucosamine and 2,3-diacylglucosamine-1-phosphate to form lipid A disaccharide, a precursor of lipid A, a phosphorylated glycolipid that anchors the lipopolysaccharide to the outer membrane of the cell. This chain is Lipid-A-disaccharide synthase, found in Pseudomonas aeruginosa (strain LESB58).